A 1056-amino-acid polypeptide reads, in one-letter code: Ribosomal protein S6 kinase delta-1 (1056 aa).

In terms of domain architecture, PX spans 8-132; the sequence is SADLARFYTV…DFFKGGVISD (125 aa). Residues 204 to 223 are disordered; it reads VGAVASDSEPSRVEDRESRS. Residues 212–222 show a composition bias toward basic and acidic residues; that stretch reads EPSRVEDRESR. In terms of domain architecture, MIT spans 276–304; it reads VQGESSPTRREAVKRRTAEYLMRAESICS. Residues Ser281, Ser422, Ser423, Ser426, Ser446, Ser448, and Ser454 each carry the phosphoserine modification. The Protein kinase 1 domain occupies 343–444; sequence GVIDKVLLVM…SMPPRVCLQQ (102 aa). The disordered stretch occupies residues 426–504; sequence SLDIKEGRPS…KWLDSGSSSE (79 aa). Positions 443-454 are enriched in low complexity; sequence QQPSASPQGGSS. Positions 473–482 are enriched in polar residues; the sequence is TSLTPSSQDD. Ser493 and Ser527 each carry phosphoserine. The interval 529-588 is disordered; it reads SEESVMQPEGDKADTQAVSSPASLATGSVSPSTHLRVFSGGEDLEAVSSPPTSESLSRSK. Positions 544-561 are enriched in polar residues; that stretch reads QAVSSPASLATGSVSPST. Low complexity predominate over residues 576–587; sequence SSPPTSESLSRS. 8 positions are modified to phosphoserine: Ser577, Ser599, Ser602, Ser634, Ser655, Ser658, Ser661, and Ser787. Residues 628–662 form a disordered region; that stretch reads TLEDGDSPSQSLDPGESKRESEAQDSVSRGSDDSV. The Protein kinase 2 domain maps to 789–1046; that stretch reads RSESDRLGQV…VEDIKSHPFF (258 aa). ATP contacts are provided by residues 795–803 and Lys823; that span reads LGQVEVVVT. Asp919 serves as the catalytic Proton acceptor.

It belongs to the protein kinase superfamily. Ser/Thr protein kinase family. S6 kinase subfamily. As to quaternary structure, interacts with SPHK1 and phosphatidylinositol 3-phosphate. Interacts (via PX domain) with PRDX3.

It is found in the cytoplasm. It localises to the membrane. The protein resides in the early endosome. The catalysed reaction is L-seryl-[protein] + ATP = O-phospho-L-seryl-[protein] + ADP + H(+). It carries out the reaction L-threonyl-[protein] + ATP = O-phospho-L-threonyl-[protein] + ADP + H(+). Functionally, may be involved in transmitting sphingosine-1 phosphate (SPP)-mediated signaling into the cell. Plays a role in the recruitment of PRDX3 to early endosomes. This Mus musculus (Mouse) protein is Ribosomal protein S6 kinase delta-1 (Rps6kc1).